The chain runs to 67 residues: Large ribosomal subunit protein bL31 (67 aa).

This sequence belongs to the bacterial ribosomal protein bL31 family. Type A subfamily. Part of the 50S ribosomal subunit.

Functionally, binds the 23S rRNA. The polypeptide is Large ribosomal subunit protein bL31 (Leptospira borgpetersenii serovar Hardjo-bovis (strain JB197)).